A 256-amino-acid chain; its full sequence is Acetyl-coenzyme A carboxylase carboxyl transferase subunit alpha (256 aa).

The region spanning 1–236 (MTDVARILKE…RSHLIDEITQ (236 aa)) is the CoA carboxyltransferase C-terminal domain.

This sequence belongs to the AccA family. In terms of assembly, acetyl-CoA carboxylase is a heterohexamer composed of biotin carboxyl carrier protein (AccB), biotin carboxylase (AccC) and two subunits each of ACCase subunit alpha (AccA) and ACCase subunit beta (AccD).

The protein localises to the cytoplasm. It carries out the reaction N(6)-carboxybiotinyl-L-lysyl-[protein] + acetyl-CoA = N(6)-biotinyl-L-lysyl-[protein] + malonyl-CoA. The protein operates within lipid metabolism; malonyl-CoA biosynthesis; malonyl-CoA from acetyl-CoA: step 1/1. In terms of biological role, component of the acetyl coenzyme A carboxylase (ACC) complex. First, biotin carboxylase catalyzes the carboxylation of biotin on its carrier protein (BCCP) and then the CO(2) group is transferred by the carboxyltransferase to acetyl-CoA to form malonyl-CoA. The chain is Acetyl-coenzyme A carboxylase carboxyl transferase subunit alpha from Streptococcus equi subsp. zooepidemicus (strain MGCS10565).